The sequence spans 194 residues: HTH-type transcriptional regulator BetI (194 aa).

The HTH tetR-type domain maps to 8–68 (EIRRAQLIDA…ATMRHVLRDL (61 aa)). A DNA-binding region (H-T-H motif) is located at residues 31 to 50 (TLASVAQRANISTGIVSHYF).

Its pathway is amine and polyamine biosynthesis; betaine biosynthesis via choline pathway [regulation]. Functionally, repressor involved in the biosynthesis of the osmoprotectant glycine betaine. It represses transcription of the choline transporter BetT and the genes of BetAB involved in the synthesis of glycine betaine. The protein is HTH-type transcriptional regulator BetI of Burkholderia lata (strain ATCC 17760 / DSM 23089 / LMG 22485 / NCIMB 9086 / R18194 / 383).